A 100-amino-acid chain; its full sequence is uncharacterized protein (100 aa).

The tract at residues 78–100 (KPYRTESGTSSSNRMMLPPRQHV) is disordered.

This is an uncharacterized protein from Caenorhabditis elegans.